The following is a 465-amino-acid chain: MNKENKLIPGLPSGFEDRWGKKLILKKKLINTIEANFVKFGFGALETPSFEISENIGSFLADDDSNPMSDVFSFKDGEKNITLRYDLSSPLARFVAQNNQELPLPYKRYQMGDVWRNEKAGNARYRSFLQCDADIVGNVNPAQANAELCNLIASTLLACGLKKDQFVVNISNRKIVQGLIEDLKISDDKKIKVMRAIDKLDKPGFGLRGVEDLLKEERVDASGAVTKGANLTDDQASQIINFLKVKDLKELKENLKNPLSQEGIKELEDLLEIVSYGDYLDQIKTNFTIVRGLAYYDGFCVETNLNFKAKNSKGKEVDIGSICSGGQYNKLISRFKGVDIPGTGMSFGVDRLLFAMMQLDQIEVDEKKPVIICVMDEKYLKNYYEILKVLRDNNINSEIFLDSKKNLGKQLTYANKKQCPVAVICGENEFKDNTITLKNLLGVKGENNQLTFPKENLINEIKKFI.

It belongs to the class-II aminoacyl-tRNA synthetase family. In terms of assembly, homodimer.

It is found in the cytoplasm. The catalysed reaction is tRNA(His) + L-histidine + ATP = L-histidyl-tRNA(His) + AMP + diphosphate + H(+). The polypeptide is Histidine--tRNA ligase (hisS) (Pelagibacter ubique (strain HTCC1062)).